Here is a 197-residue protein sequence, read N- to C-terminus: Recombination protein RecR (197 aa).

The segment at 57 to 72 adopts a C4-type zinc-finger fold; that stretch reads CSVCFGITEEDPCRLC. Positions 79–174 constitute a Toprim domain; it reads TSLCVVEEPQ…RVTRLAHGIP (96 aa).

Belongs to the RecR family.

In terms of biological role, may play a role in DNA repair. It seems to be involved in an RecBC-independent recombinational process of DNA repair. It may act with RecF and RecO. The polypeptide is Recombination protein RecR (Geobacter metallireducens (strain ATCC 53774 / DSM 7210 / GS-15)).